Reading from the N-terminus, the 510-residue chain is NAD(P)H-quinone oxidoreductase subunit 2 B, chloroplastic (510 aa).

12 consecutive transmembrane segments (helical) span residues 24–44, 57–77, 99–119, 124–144, 183–203, 227–247, 295–315, 323–343, 347–367, 395–415, 418–438, and 484–504; these read LLLFHGSFIFPECILIFGLIL, IPWLYFISSTSLVMSITALLF, IFQFLILLCSTLCIPLSVEYI, MAITEFLLFVLTATLGGMFLC, YLLMGGASSSILVHGFSWLYG, PGISIALISITVGIGFKLSPA, WHLLLEILAILSMILGNLIAI, MLAYSSIGQIGYVIIGIIVGD, GYASMITYMLFYISMNLGTFA, ALSSALCLLSLGGLPPLAGFF, LHLFWCGWQAGLYFLVSIGLL, and MIVCVIASTIPGISMNPIIAI.

This sequence belongs to the complex I subunit 2 family. In terms of assembly, NDH is composed of at least 16 different subunits, 5 of which are encoded in the nucleus.

The protein resides in the plastid. Its subcellular location is the chloroplast thylakoid membrane. The enzyme catalyses a plastoquinone + NADH + (n+1) H(+)(in) = a plastoquinol + NAD(+) + n H(+)(out). It catalyses the reaction a plastoquinone + NADPH + (n+1) H(+)(in) = a plastoquinol + NADP(+) + n H(+)(out). Functionally, NDH shuttles electrons from NAD(P)H:plastoquinone, via FMN and iron-sulfur (Fe-S) centers, to quinones in the photosynthetic chain and possibly in a chloroplast respiratory chain. The immediate electron acceptor for the enzyme in this species is believed to be plastoquinone. Couples the redox reaction to proton translocation, and thus conserves the redox energy in a proton gradient. This Calycanthus floridus var. glaucus (Eastern sweetshrub) protein is NAD(P)H-quinone oxidoreductase subunit 2 B, chloroplastic.